The following is a 26-amino-acid chain: uncharacterized protein (26 aa).

A helical membrane pass occupies residues 3–23 (IIYLILFLIVIYLLYRILDVL).

It localises to the membrane. This is an uncharacterized protein from Helicobacter pylori (strain J99 / ATCC 700824) (Campylobacter pylori J99).